Reading from the N-terminus, the 381-residue chain is Chorismate synthase (381 aa).

NADP(+)-binding residues include R41 and R47. FMN contacts are provided by residues 127 to 129 (RAS), 247 to 248 (QA), G291, 306 to 310 (KPIPT), and R332.

Belongs to the chorismate synthase family. In terms of assembly, homotetramer. Requires FMNH2 as cofactor.

The catalysed reaction is 5-O-(1-carboxyvinyl)-3-phosphoshikimate = chorismate + phosphate. It participates in metabolic intermediate biosynthesis; chorismate biosynthesis; chorismate from D-erythrose 4-phosphate and phosphoenolpyruvate: step 7/7. Catalyzes the anti-1,4-elimination of the C-3 phosphate and the C-6 proR hydrogen from 5-enolpyruvylshikimate-3-phosphate (EPSP) to yield chorismate, which is the branch point compound that serves as the starting substrate for the three terminal pathways of aromatic amino acid biosynthesis. This reaction introduces a second double bond into the aromatic ring system. The chain is Chorismate synthase from Anaeromyxobacter dehalogenans (strain 2CP-C).